Consider the following 332-residue polypeptide: Pyrroline-5-carboxylate reductase (332 aa).

It belongs to the pyrroline-5-carboxylate reductase family.

It catalyses the reaction L-proline + NADP(+) = (S)-1-pyrroline-5-carboxylate + NADPH + 2 H(+). It carries out the reaction L-proline + NAD(+) = (S)-1-pyrroline-5-carboxylate + NADH + 2 H(+). Its pathway is amino-acid biosynthesis; L-proline biosynthesis; L-proline from L-glutamate 5-semialdehyde: step 1/1. The protein is Pyrroline-5-carboxylate reductase (pro-1) of Neurospora crassa (strain ATCC 24698 / 74-OR23-1A / CBS 708.71 / DSM 1257 / FGSC 987).